Here is a 247-residue protein sequence, read N- to C-terminus: PF03932 family protein CutC (247 aa).

The protein belongs to the CutC family.

It is found in the cytoplasm. In Aliivibrio fischeri (strain MJ11) (Vibrio fischeri), this protein is PF03932 family protein CutC.